Here is a 279-residue protein sequence, read N- to C-terminus: Large ribosomal subunit protein uL2 (279 aa).

Residues 222–279 (GVAMNPVDHPHGGGEGRTSGGRHPVTPAGKPTKGAKTRVNKATDKFIIRSRHKAKKGR) are disordered. The segment covering 269-279 (IRSRHKAKKGR) has biased composition (basic residues).

The protein belongs to the universal ribosomal protein uL2 family. Part of the 50S ribosomal subunit. Forms a bridge to the 30S subunit in the 70S ribosome.

Functionally, one of the primary rRNA binding proteins. Required for association of the 30S and 50S subunits to form the 70S ribosome, for tRNA binding and peptide bond formation. It has been suggested to have peptidyltransferase activity; this is somewhat controversial. Makes several contacts with the 16S rRNA in the 70S ribosome. In Caulobacter vibrioides (strain ATCC 19089 / CIP 103742 / CB 15) (Caulobacter crescentus), this protein is Large ribosomal subunit protein uL2.